The sequence spans 130 residues: Ribosome biogenesis inhibitor MINAS-60 (130 aa).

Residues 61–130 (SKVQRIPTRP…RRRRPVTSSC (70 aa)) are disordered. Residues 109 to 130 (KGRRRRRRMRRRRRRRPVTSSC) are compositionally biased toward basic residues.

In terms of assembly, interacts with 60S ribosome assembly factors GTPBP4 and MRTO4.

The protein resides in the nucleus. It localises to the nucleolus. Its function is as follows. Acts as a late-stage inhibitor of pre-60S ribosome assembly by preventing pre-60S ribosome export from nucleus. The sequence is that of Ribosome biogenesis inhibitor MINAS-60 from Mus musculus (Mouse).